A 128-amino-acid polypeptide reads, in one-letter code: Large ribosomal subunit protein uL22 (128 aa).

This sequence belongs to the universal ribosomal protein uL22 family. Part of the 50S ribosomal subunit.

In terms of biological role, this protein binds specifically to 23S rRNA; its binding is stimulated by other ribosomal proteins, e.g. L4, L17, and L20. It is important during the early stages of 50S assembly. It makes multiple contacts with different domains of the 23S rRNA in the assembled 50S subunit and ribosome. The globular domain of the protein is located near the polypeptide exit tunnel on the outside of the subunit, while an extended beta-hairpin is found that lines the wall of the exit tunnel in the center of the 70S ribosome. The protein is Large ribosomal subunit protein uL22 of Prochlorococcus marinus (strain AS9601).